The following is a 48-amino-acid chain: MARYRCCRSRSRCRRRRRRCYRRRRRCCRRRRRRVCCRRYTVIRCRRR.

Belongs to the protamine P1 family. Testis.

Its subcellular location is the nucleus. The protein localises to the chromosome. Functionally, protamines substitute for histones in the chromatin of sperm during the haploid phase of spermatogenesis. They compact sperm DNA into a highly condensed, stable and inactive complex. This is Sperm protamine P1 (PRM1) from Eptesicus fuscus (Big brown bat).